A 93-amino-acid chain; its full sequence is Integration host factor subunit beta (93 aa).

The protein belongs to the bacterial histone-like protein family. As to quaternary structure, heterodimer of an alpha and a beta chain.

This protein is one of the two subunits of integration host factor, a specific DNA-binding protein that functions in genetic recombination as well as in transcriptional and translational control. The polypeptide is Integration host factor subunit beta (Vibrio parahaemolyticus serotype O3:K6 (strain RIMD 2210633)).